Consider the following 403-residue polypeptide: Tryptophan synthase beta chain (403 aa).

An N6-(pyridoxal phosphate)lysine modification is found at lysine 90.

The protein belongs to the TrpB family. In terms of assembly, tetramer of two alpha and two beta chains. Pyridoxal 5'-phosphate is required as a cofactor.

It catalyses the reaction (1S,2R)-1-C-(indol-3-yl)glycerol 3-phosphate + L-serine = D-glyceraldehyde 3-phosphate + L-tryptophan + H2O. It participates in amino-acid biosynthesis; L-tryptophan biosynthesis; L-tryptophan from chorismate: step 5/5. In terms of biological role, the beta subunit is responsible for the synthesis of L-tryptophan from indole and L-serine. The polypeptide is Tryptophan synthase beta chain (Leifsonia xyli subsp. xyli (strain CTCB07)).